Reading from the N-terminus, the 895-residue chain is Plasma membrane ATPase 1 (895 aa).

The disordered stretch occupies residues 1–53; the sequence is MSATEPTNEKVDKIVSDDEDEDIDQLVADLQSNPGAGDEEEEEENDSSFKAVP. Topologically, residues 1-92 are cytoplasmic; that stretch reads MSATEPTNEK…AEEQENLVLK (92 aa). Basic and acidic residues predominate over residues 7-16; the sequence is TNEKVDKIVS. Positions 37 to 46 are enriched in acidic residues; sequence GDEEEEEEND. Residues 93–113 form a helical membrane-spanning segment; that stretch reads FVMFFVGPIQFVMEAAAVLAA. Residues 114 to 117 are Extracellular-facing; the sequence is GLED. The helical transmembrane segment at 118–137 threads the bilayer; that stretch reads WVDFGVICALLLLNAFVGFI. At 138 to 268 the chain is on the cytoplasmic side; the sequence is QEYQAGSIVD…GTGHFTEVLN (131 aa). Residues 269–290 form a helical membrane-spanning segment; it reads GIGTTLLVFVIVTLLVVWVACF. Over 291–301 the chain is Extracellular; sequence YRTVRIVPILR. A helical transmembrane segment spans residues 302-324; sequence YTLAITIIGVPVGLPAVVTTTMA. Topologically, residues 325-696 are cytoplasmic; sequence VGAAYLAKKQ…IAILNRSLDI (372 aa). Aspartate 355 serves as the catalytic 4-aspartylphosphate intermediate. Residues aspartate 611 and aspartate 615 each contribute to the Mg(2+) site. Residues 697-715 traverse the membrane as a helical segment; it reads NLIVFIAIFADVATLAIAY. Over 716–731 the chain is Extracellular; sequence DNAPYDPKPVKWNLPR. The chain crosses the membrane as a helical span at residues 732–751; the sequence is LWGMSIVLGIILAIGTWITL. Topologically, residues 752-801 are cytoplasmic; sequence TTMLLPKGGIIQNFGGLDGILFLQISLTENWLIFVTRAQGPFWSSIPSWQ. A helical membrane pass occupies residues 802-822; sequence LSGAVLIVDIIATCFTLFGWW. Residues 823–834 lie on the Extracellular side of the membrane; sequence SQNWTDIVTVVR. A helical transmembrane segment spans residues 835-851; sequence TWIWSFGVFCVMGGAYY. At 852 to 895 the chain is on the cytoplasmic side; the sequence is LMSTSEAFDNFCNGRKPQQHTDKRSLEDFLVSMQRVSTQHEKST.

This sequence belongs to the cation transport ATPase (P-type) (TC 3.A.3) family. Type IIIA subfamily.

It is found in the cell membrane. The catalysed reaction is ATP + H2O + H(+)(in) = ADP + phosphate + 2 H(+)(out). Functionally, the plasma membrane ATPase of plants and fungi is a hydrogen ion pump. The proton gradient it generates drives the active transport of nutrients by H(+)-symport. The resulting external acidification and/or internal alkinization may mediate growth responses. In Candida albicans (Yeast), this protein is Plasma membrane ATPase 1 (PMA1).